The sequence spans 173 residues: Mediator of RNA polymerase II transcription subunit 19 (173 aa).

A disordered region spans residues 139-173 (LMRGDDMSENDEFGARRSKRKKKAQNGTDSKRQHI).

The protein belongs to the Mediator complex subunit 19 family. As to quaternary structure, component of the Mediator complex.

The protein localises to the nucleus. Component of the Mediator complex, a coactivator involved in the regulated transcription of nearly all RNA polymerase II-dependent genes. Mediator functions as a bridge to convey information from gene-specific regulatory proteins to the basal RNA polymerase II transcription machinery. Mediator is recruited to promoters by direct interactions with regulatory proteins and serves as a scaffold for the assembly of a functional preinitiation complex with RNA polymerase II and the general transcription factors. This is Mediator of RNA polymerase II transcription subunit 19 (ROX3) from Scheffersomyces stipitis (strain ATCC 58785 / CBS 6054 / NBRC 10063 / NRRL Y-11545) (Yeast).